We begin with the raw amino-acid sequence, 275 residues long: Small ribosomal subunit protein uS2 (275 aa).

Residues 244–275 (REGAEASKKKATVKKKAAPRAASGESAEAAAE) are disordered. The segment covering 252-261 (KKATVKKKAA) has biased composition (basic residues). Low complexity predominate over residues 262–275 (PRAASGESAEAAAE).

The protein belongs to the universal ribosomal protein uS2 family.

This chain is Small ribosomal subunit protein uS2, found in Thioalkalivibrio sulfidiphilus (strain HL-EbGR7).